A 430-amino-acid polypeptide reads, in one-letter code: GPI mannosyltransferase 1 (430 aa).

Residues M1–S11 lie on the Cytoplasmic side of the membrane. Residues L12–F32 traverse the membrane as a helical segment. Over H33–P72 the chain is Lumenal. A helical membrane pass occupies residues L73–F93. At A94–R115 the chain is on the cytoplasmic side. Residues S116 to T136 form a helical membrane-spanning segment. The Lumenal segment spans residues R137–A163. A helical transmembrane segment spans residues A164–L184. At T185–T206 the chain is on the cytoplasmic side. Residues A207–L227 form a helical membrane-spanning segment. The Lumenal portion of the chain corresponds to C228–A360. Residues L361–L381 form a helical membrane-spanning segment. Residues E382–D388 are Cytoplasmic-facing. The chain crosses the membrane as a helical span at residues F389–M409. At L410–A430 the chain is on the lumenal side.

It belongs to the PIGM family.

It is found in the endoplasmic reticulum membrane. The protein operates within glycolipid biosynthesis; glycosylphosphatidylinositol-anchor biosynthesis. Functionally, mannosyltransferase involved in glycosylphosphatidylinositol-anchor biosynthesis. Transfers the first alpha-1,4-mannose to GlcN-PI during GPI precursor assembly. In Trypanosoma brucei brucei (strain 927/4 GUTat10.1), this protein is GPI mannosyltransferase 1 (PIGM).